The sequence spans 494 residues: Glycerol kinase (494 aa).

Thr-13 provides a ligand contact to ADP. 3 residues coordinate ATP: Thr-13, Thr-14, and Ser-15. Residue Thr-13 coordinates sn-glycerol 3-phosphate. Arg-17 is a binding site for ADP. The sn-glycerol 3-phosphate site is built by Arg-83, Glu-84, Tyr-135, and Asp-244. Positions 83, 84, 135, 244, and 245 each coordinate glycerol. ADP-binding residues include Thr-266 and Gly-309. The ATP site is built by Thr-266, Gly-309, Gln-313, and Gly-410. 2 residues coordinate ADP: Gly-410 and Asn-414.

It belongs to the FGGY kinase family.

The catalysed reaction is glycerol + ATP = sn-glycerol 3-phosphate + ADP + H(+). It functions in the pathway polyol metabolism; glycerol degradation via glycerol kinase pathway; sn-glycerol 3-phosphate from glycerol: step 1/1. Its activity is regulated as follows. Inhibited by fructose 1,6-bisphosphate (FBP). In terms of biological role, key enzyme in the regulation of glycerol uptake and metabolism. Catalyzes the phosphorylation of glycerol to yield sn-glycerol 3-phosphate. The polypeptide is Glycerol kinase (Shewanella baltica (strain OS185)).